The chain runs to 351 residues: Beta-1,4-xylosyltransferase IRX9 (351 aa).

Over M1–K16 the chain is Cytoplasmic. The chain crosses the membrane as a helical; Signal-anchor for type II membrane protein span at residues A17 to A36. At G37–T351 the chain is on the lumenal side. N-linked (GlcNAc...) asparagine glycosylation is found at N64 and N74. The interval S80–N107 is disordered. The span at E89–N107 shows a compositional bias: basic and acidic residues. Residues N271 and N287 are each glycosylated (N-linked (GlcNAc...) asparagine).

This sequence belongs to the glycosyltransferase 43 family. As to expression, expressed in developing interfascicular fibers, primary and secondary xylem in stems and developing secondary xylem in roots.

Its subcellular location is the golgi apparatus membrane. It carries out the reaction [(1-&gt;4)-beta-D-xylan](n) + UDP-alpha-D-xylose = [(1-&gt;4)-beta-D-xylan](n+1) + UDP + H(+). Functionally, involved in the synthesis of the hemicellulose glucuronoxylan, a major component of secondary cell walls. Xylan xylosyltransferase that acts cooperatively with IRX14 to achieve the successive addition of xylosyl residues during xylan backbone elongation. This is Beta-1,4-xylosyltransferase IRX9 from Arabidopsis thaliana (Mouse-ear cress).